The following is a 135-amino-acid chain: Protein PsiE homolog (135 aa).

Helical transmembrane passes span 20–40, 54–74, 82–102, and 107–127; these read VGLI…TFHL, YMLI…ALIV, HFPL…LIIV, and PIDT…LYLA.

The protein belongs to the PsiE family.

It is found in the cell inner membrane. This Yersinia enterocolitica serotype O:8 / biotype 1B (strain NCTC 13174 / 8081) protein is Protein PsiE homolog.